A 242-amino-acid polypeptide reads, in one-letter code: Peptidase E (242 aa).

Active-site charge relay system residues include S123, D138, and H160.

It belongs to the peptidase S51 family.

The protein resides in the cytoplasm. It carries out the reaction Dipeptidase E catalyzes the hydrolysis of dipeptides Asp-|-Xaa. It does not act on peptides with N-terminal Glu, Asn or Gln, nor does it cleave isoaspartyl peptides.. In terms of biological role, hydrolyzes dipeptides containing N-terminal aspartate residues. May play a role in allowing the cell to use peptide aspartate to spare carbon otherwise required for the synthesis of the aspartate family of amino acids. This chain is Peptidase E, found in Nostoc sp. (strain PCC 7120 / SAG 25.82 / UTEX 2576).